Reading from the N-terminus, the 387-residue chain is Protein BTN1 (387 aa).

The first 31 residues, 1–31 (MELDRDKKTFAYFWLFGLINNILYVVILSAA), serve as a signal peptide directing secretion. Helical transmembrane passes span 43–63 (IVLL…PFFV), 72–92 (IPIL…RSLW), 93–113 (LCLP…ITFL), 129–149 (SGTG…TTVF), 151–171 (LNIQ…LLYY), 225–245 (TVYL…LFPI), 257–276 (YVTY…TWGH), 278–298 (LPVK…LITL), 308–328 (SISW…SSYV), and 347–367 (LGSV…LGII).

Belongs to the battenin family.

Its subcellular location is the vacuole membrane. Its function is as follows. Involved in vacuolar transport and vacuole pH homeostasis. Also required for cytokinesis. The sequence is that of Protein BTN1 (BTN1) from Kluyveromyces lactis (strain ATCC 8585 / CBS 2359 / DSM 70799 / NBRC 1267 / NRRL Y-1140 / WM37) (Yeast).